Consider the following 400-residue polypeptide: MDSSAVPANASNCTDPLAPSTCSPAPGPGSWVNLSHLDGNLSDPCGPNRTDLGGSDSPCPPTGSPSMITAITIMALYSIVCVVGLFGNFLVMYVIVRYTKMKTATNIYIFNLALADALATSTLPFQSVNYLMGTWPFGTILCKIVISIDYYNMFTSIFTLCTMSVDRYIAVCHPVKALDFRTPRNAKIVNVCNWIISSAIGLPVMFMATTKYRQGSIDCTLTFSHPTWYWENLLKICVFIFAFIMPVLIITVCYGLMILRLKSVRMLSGSKEKDRNLRRITRMVLVVVAVFIVCWTPIHIYVIIKALVTIPETTFQTVSWHFCIALGYTNSCLNPVLYAFLDENFKRCFREFCIPTPSAIEQQNSARIRQNTRDHPSTANTVDRTNHQLENLEAETAPLP.

Topologically, residues 1 to 68 are extracellular; it reads MDSSAVPANA…CPPTGSPSMI (68 aa). Residues asparagine 9, asparagine 12, asparagine 33, asparagine 40, and asparagine 48 are each glycosylated (N-linked (GlcNAc...) asparagine). A helical membrane pass occupies residues 69 to 93; sequence TAITIMALYSIVCVVGLFGNFLVMY. Residues 94–106 are Cytoplasmic-facing; it reads VIVRYTKMKTATN. A helical membrane pass occupies residues 107–131; sequence IYIFNLALADALATSTLPFQSVNYL. Over 132–142 the chain is Extracellular; it reads MGTWPFGTILC. Cysteine 142 and cysteine 219 are joined by a disulfide. Residues 143–165 traverse the membrane as a helical segment; the sequence is KIVISIDYYNMFTSIFTLCTMSV. At 166–185 the chain is on the cytoplasmic side; that stretch reads DRYIAVCHPVKALDFRTPRN. Residue tyrosine 168 is modified to Phosphotyrosine. A helical transmembrane segment spans residues 186-207; sequence AKIVNVCNWIISSAIGLPVMFM. The Extracellular segment spans residues 208-230; the sequence is ATTKYRQGSIDCTLTFSHPTWYW. A helical transmembrane segment spans residues 231 to 255; that stretch reads ENLLKICVFIFAFIMPVLIITVCYG. Topologically, residues 256-279 are cytoplasmic; the sequence is LMILRLKSVRMLSGSKEKDRNLRR. Residues 280-306 traverse the membrane as a helical segment; the sequence is ITRMVLVVVAVFIVCWTPIHIYVIIKA. The Extracellular portion of the chain corresponds to 307–314; the sequence is LVTIPETT. The chain crosses the membrane as a helical span at residues 315–338; that stretch reads FQTVSWHFCIALGYTNSCLNPVLY. Positions 334-338 match the NPxxY; plays a role in stabilizing the activated conformation of the receptor motif; sequence NPVLY. At 339-400 the chain is on the cytoplasmic side; the sequence is AFLDENFKRC…NLEAETAPLP (62 aa). Cysteine 353 is lipidated: S-palmitoyl cysteine. Serine 365 bears the Phosphoserine mark. Threonine 372 bears the Phosphothreonine mark. Serine 377 carries the post-translational modification Phosphoserine. Position 396 is a phosphothreonine (threonine 396).

This sequence belongs to the G-protein coupled receptor 1 family. Forms homooligomers and heterooligomers with other GPCRs, such as OPRD1, OPRK1, OPRL1, NPFFR2, ADRA2A, SSTR2, CNR1 and CCR5 (probably in dimeric forms). Interacts with heterotrimeric G proteins; interaction with a heterotrimeric complex containing GNAI1, GNB1 and GNG2 stabilizes the active conformation of the receptor and increases its affinity for endomorphin-2, the synthetic opioid peptide DAMGO and for morphinan agonists. Interacts with PPL; the interaction disrupts agonist-mediated G-protein activation. Interacts (via C-terminus) with DNAJB4 (via C-terminus). Interacts with calmodulin; the interaction inhibits the constitutive activity of OPRM1; it abolishes basal and attenuates agonist-stimulated G-protein coupling. Interacts with FLNA, PLD2, RANBP9 and WLS and GPM6A. Interacts with RTP4. Interacts with SYP and GNAS. Interacts with RGS9, RGS17, RGS20, RGS4, PPP1R9B and HINT1. Post-translationally, phosphorylated. Differentially phosphorylated in basal and agonist-induced conditions. Agonist-mediated phosphorylation modulates receptor internalization. Phosphorylated by GRK2 in a agonist-dependent manner. Phosphorylation at Tyr-168 requires receptor activation, is dependent on non-receptor protein tyrosine kinase Src and results in a decrease in agonist efficacy by reducing G-protein coupling efficiency. Phosphorylated on tyrosine residues; the phosphorylation is involved in agonist-induced G-protein-independent receptor down-regulation. Phosphorylation at Ser-377 is involved in G-protein-dependent but not beta-arrestin-dependent activation of the ERK pathway. Ubiquitinated. A basal ubiquitination seems not to be related to degradation. Ubiquitination is increased upon formation of OPRM1:OPRD1 oligomers leading to proteasomal degradation; the ubiquitination is diminished by RTP4.

It localises to the cell membrane. Its subcellular location is the cell projection. It is found in the axon. The protein localises to the perikaryon. The protein resides in the dendrite. It localises to the endosome. Functionally, receptor for endogenous opioids such as beta-endorphin and endomorphin. Receptor for natural and synthetic opioids including morphine, heroin, DAMGO, fentanyl, etorphine, buprenorphin and methadone. Also activated by enkephalin peptides, such as Met-enkephalin or Met-enkephalin-Arg-Phe, with higher affinity for Met-enkephalin-Arg-Phe. Agonist binding to the receptor induces coupling to an inactive GDP-bound heterotrimeric G-protein complex and subsequent exchange of GDP for GTP in the G-protein alpha subunit leading to dissociation of the G-protein complex with the free GTP-bound G-protein alpha and the G-protein beta-gamma dimer activating downstream cellular effectors. The agonist- and cell type-specific activity is predominantly coupled to pertussis toxin-sensitive G(i) and G(o) G alpha proteins, GNAI1, GNAI2, GNAI3 and GNAO1, and to a lesser extent to pertussis toxin-insensitive G alpha proteins GNAZ and GNA15. They mediate an array of downstream cellular responses, including inhibition of adenylate cyclase activity and both N-type and L-type calcium channels, activation of inward rectifying potassium channels, mitogen-activated protein kinase (MAPK), phospholipase C (PLC), phosphoinositide/protein kinase (PKC), phosphoinositide 3-kinase (PI3K) and regulation of NF-kappa-B. Also couples to adenylate cyclase stimulatory G alpha proteins. The selective temporal coupling to G-proteins and subsequent signaling can be regulated by RGSZ proteins, such as RGS9, RGS17 and RGS4. Phosphorylation by members of the GPRK subfamily of Ser/Thr protein kinases and association with beta-arrestins is involved in short-term receptor desensitization. Beta-arrestins associate with the GPRK-phosphorylated receptor and uncouple it from the G-protein thus terminating signal transduction. The phosphorylated receptor is internalized through endocytosis via clathrin-coated pits which involves beta-arrestins. The activation of the ERK pathway occurs either in a G-protein-dependent or a beta-arrestin-dependent manner and is regulated by agonist-specific receptor phosphorylation. Acts as a class A G-protein coupled receptor (GPCR) which dissociates from beta-arrestin at or near the plasma membrane and undergoes rapid recycling. Receptor down-regulation pathways are varying with the agonist and occur dependent or independent of G-protein coupling. Endogenous ligands induce rapid desensitization, endocytosis and recycling. Heterooligomerization with other GPCRs can modulate agonist binding, signaling and trafficking properties. Involved in neurogenesis. This Saimiri boliviensis boliviensis (Bolivian squirrel monkey) protein is Mu-type opioid receptor (OPRM1).